Reading from the N-terminus, the 420-residue chain is Acetyl-CoA acetyltransferase, mitochondrial (420 aa).

The transit peptide at 1 to 33 (MAFCGPRTAARLSHSTRALHYTHRGHVSQRTLN) directs the protein to the mitochondrion. Cysteine 119 (acyl-thioester intermediate) is an active-site residue. CoA contacts are provided by residues tyrosine 212, 251 to 253 (RVD), and lysine 256. Tyrosine 212 is a K(+) binding site. 3 residues coordinate K(+): alanine 273, alanine 274, and alanine 276. A CoA-binding site is contributed by serine 277. Position 374 (valine 374) interacts with K(+). The active-site Proton donor/acceptor is the cysteine 406.

It belongs to the thiolase-like superfamily. Thiolase family. Homotetramer.

Its subcellular location is the mitochondrion. The catalysed reaction is 2 acetyl-CoA = acetoacetyl-CoA + CoA. It catalyses the reaction propanoyl-CoA + acetyl-CoA = 2-methyl-3-oxobutanoyl-CoA + CoA. It participates in lipid metabolism; fatty acid beta-oxidation. Functionally, this is one of the enzymes that catalyzes the last step of the mitochondrial beta-oxidation pathway, an aerobic process breaking down fatty acids into acetyl-CoA. Using free coenzyme A/CoA, catalyzes the thiolytic cleavage of medium- to long-chain 3-oxoacyl-CoAs into acetyl-CoA and a fatty acyl-CoA shortened by two carbon atoms. The activity of the enzyme is reversible and it can also catalyze the condensation of two acetyl-CoA molecules into acetoacetyl-CoA. Thereby, it plays a major role in ketone body metabolism. In Xenopus tropicalis (Western clawed frog), this protein is Acetyl-CoA acetyltransferase, mitochondrial (acat1).